A 277-amino-acid polypeptide reads, in one-letter code: MTFGPQPNSLTPLINNQICKKKVAIHAQGLNLILGGKTLLDNFDIDINAGEVTALLGPNGAGKSSLLKVLCGEIEATGSIEFFGQNRKQWSAKALAKHLGVLPQHSTLNFAFLAHEVVELGGLPLELSNIQTQQITQEKMALVDVCDLSHRLYPSLSGGEKQRVHFARILTQVSQAGDQCVLMLDEPTSALDLAHQHRTLQVAKELASNGAAVIIVLHDLNLAAQYADRLVIVNHGLIQADGTPWQALQPDIIERVYGWPVYISSHPTGDFPVILSH.

An ABC transporter domain is found at 25–260 (IHAQGLNLIL…DIIERVYGWP (236 aa)). 57–64 (GPNGAGKS) contributes to the ATP binding site.

The protein belongs to the ABC transporter superfamily. Heme (hemin) importer (TC 3.A.1.14.5) family. In terms of assembly, the complex is composed of two ATP-binding proteins (HmuV), two transmembrane proteins (HmuU) and a solute-binding protein (HmuT).

It is found in the cell inner membrane. Part of the ABC transporter complex HmuTUV involved in hemin import. Responsible for energy coupling to the transport system. The protein is Hemin import ATP-binding protein HmuV of Photobacterium profundum (strain SS9).